The primary structure comprises 136 residues: Large ribosomal subunit protein uL16 (136 aa).

The protein belongs to the universal ribosomal protein uL16 family. In terms of assembly, part of the 50S ribosomal subunit.

Functionally, binds 23S rRNA and is also seen to make contacts with the A and possibly P site tRNAs. The chain is Large ribosomal subunit protein uL16 from Haemophilus ducreyi (strain 35000HP / ATCC 700724).